Reading from the N-terminus, the 337-residue chain is Glyceraldehyde-3-phosphate dehydrogenase (337 aa).

NAD(+) is bound by residues 12-13 (RI), D34, and R79. D-glyceraldehyde 3-phosphate is bound by residues 150-152 (SCT), T181, 210-211 (TG), and R233. C151 serves as the catalytic Nucleophile. N315 is an NAD(+) binding site.

The protein belongs to the glyceraldehyde-3-phosphate dehydrogenase family. As to quaternary structure, homotetramer.

The protein localises to the cytoplasm. It catalyses the reaction D-glyceraldehyde 3-phosphate + phosphate + NAD(+) = (2R)-3-phospho-glyceroyl phosphate + NADH + H(+). It participates in carbohydrate degradation; glycolysis; pyruvate from D-glyceraldehyde 3-phosphate: step 1/5. The sequence is that of Glyceraldehyde-3-phosphate dehydrogenase (GPD-1) from Claviceps purpurea (strain 20.1) (Ergot fungus).